The following is a 155-amino-acid chain: Aspartate carbamoyltransferase regulatory chain (155 aa).

Zn(2+) contacts are provided by cysteine 109, cysteine 114, cysteine 138, and cysteine 141.

This sequence belongs to the PyrI family. As to quaternary structure, contains catalytic and regulatory chains. The cofactor is Zn(2+).

Involved in allosteric regulation of aspartate carbamoyltransferase. This Vibrio cholerae serotype O1 (strain ATCC 39315 / El Tor Inaba N16961) protein is Aspartate carbamoyltransferase regulatory chain.